Here is a 729-residue protein sequence, read N- to C-terminus: Ubiquitin carboxyl-terminal hydrolase BAP1 (729 aa).

The region spanning 4–235 (GWLELESDPG…IRFNLMAVVP (232 aa)) is the UCH catalytic domain. The Arg-finger motif motif lies at 56–60 (RRSRR). Cys91 acts as the Nucleophile in catalysis. The Proton donor role is filled by His169. Residue Ser292 is modified to Phosphoserine. The interval 301–351 (APAASEGNHTDGAEEAAGSCAQAPSHSPPNKPKLVVKPPGSSLNGVHPNPT) is disordered. Residues 363 to 366 (NHNY) carry the HBM-like motif motif. Phosphoserine is present on residues Ser369 and Ser395. Disordered regions lie at residues 372–435 (QEEE…SADG) and 464–524 (SIKT…SPVT). Residues 395–409 (SDDEDDYEDDEEDDV) show a composition bias toward acidic residues. Residues 480 to 524 (THSQPSPTPSNESTDTASEIGSAFNSPLRSPIRSANPTRPSSPVT) are compositionally biased toward polar residues. Thr493 bears the Phosphothreonine mark. 4 positions are modified to phosphoserine: Ser521, Ser537, Ser585, and Ser597. Positions 575-623 (LTEGGKGSSPSIRPIQGSQGSSSPVEKEVVEATDSREKTGMVRPGEPLS) are disordered. The segment covering 582–598 (SSPSIRPIQGSQGSSSP) has biased composition (polar residues). An interaction with BRCA1 region spans residues 596–721 (SSPVEKEVVE…QRKPDRRKRS (126 aa)). Residues 599–614 (VEKEVVEATDSREKTG) are compositionally biased toward basic and acidic residues. The stretch at 636–656 (LKCVEAEIANYEACLKEEVEK) forms a coiled coil. An interaction with YY1 region spans residues 642–686 (EIANYEACLKEEVEKRKKFKIDDQRRTHNYDEFICTFISMLAQEG). The region spanning 670–698 (NYDEFICTFISMLAQEGMLANLVEQNISV) is the ULD domain. An interaction with nucleosomal DNA forming a DNA clamp with ASXL1 region spans residues 699 to 701 (RRR). The short motif at 699–722 (RRRQGVSIGRLHKQRKPDRRKRSR) is the Classical bipartite Nuclear localization signal (NLS) element. Residues 703–729 (GVSIGRLHKQRKPDRRKRSRPYKAKRQ) are disordered. The interval 713-729 (RKPDRRKRSRPYKAKRQ) is positively charged C-terminal extension (CTE). The Non-classical PY-nuclear localization signal (PY-NLS) signature appears at 717–724 (RRKRSRPY).

The protein belongs to the peptidase C12 family. BAP1 subfamily. As to quaternary structure, core component of the polycomb repressive deubiquitinase (PR-DUB) complex, at least composed of BAP1, one of ASXL1, ASXL2 or (probably) ASXL3, and one of MBD5 or MBD6. The PR-DUB core associates with a number of accessory proteins, including FOXK1, FOXK2, KDM1B, HCFC1, YY1 and OGT; KDM1B specifically associates with ASXL2 PR-DUB complexes. The BAP1 deubiquitinase activity is not required for PR-DUB assembly. Homodimerizes (via coiled-coil hinge-region between the UCH and ULD domains) to mediate assembly of 2 copies of the BAP1-ASXL heterodimer into a bisymmetric tetramer; dimerization enhances association with nucleosomes. The PR-DUB complex associates with nucleosomes to mediate deubiquitination of 'lys-120' of histone H2AK118ub1 substrates; the association requires the positively charged C-terminal tail of BAP1. Interacts (via ULD domain) with ASXL1 (via DEUBAD domain); the interaction is direct and forms a ubiquitin binding cleft. The interaction with ASXL1 stabilizes BAP1 but is not required for nucleosome binding. Associates (via C-terminus) with nucleosome and chromatosome complexes through direct interaction with DNA and the histone3/4 dimer; this association displaces the histone-2A C-terminal tail, extending and orienting the H2AK118ub1 substrate towards the BAP1 deubiquitinase active site. Also interacts (via arginine finger) directly with the histone H2A-H2B acidic patch; this interaction is not critical for nucleosome-chromatosome association but may play a role in orienting the H2AK118ub1 substrate towards the PR-DUB complex active site. Interacts with BRCA1 (via the RING finger). Interacts (via HBM-like motif) with HCFC1. Interacts (via a C-terminal region overlapping the ULD domain) with YY1; the interaction is direct and requires the interaction with HCFC1. Interacts (when phosphorylated at Thr-493) with FOXK1. Interacts (when phosphorylated at Thr-493) with FOXK2; leading to recruitment of the PR-DUB complex and repression of FOXK2 target genes. Interacts (via non-classical PY-NLS) with TNPO1/transportin-1 (via HEAT repeats 8-12); the interaction is direct, mediates BAP1 nuclear localization and disrupts BAP1 homodimerization. Interacts (via C-terminus) with KPNA1/importin alpha5 and KPNA2/importin alpha1; these interactions can contribute to BAP1 nuclear localization but are less important than the interaction with TNPO1/transportin-1. The interaction with TNPO1/transportin-1 disrupts homodimerization and blocks ubiquitination by UBE2O. In terms of processing, ubiquitinated: monoubiquitinated at multiple sites within its nuclear localization signal (NLS) BY UBE2O, leading to cytoplasmic retention. Able to mediate autodeubiquitination via intramolecular interactions to counteract cytoplasmic retention. Monoubiquitinated on at least 4 sites near or within its PY-NLS. As to expression, highly expressed in testis, placenta and ovary. Expressed in breast. levels in the placenta increase over the course of pregnancy.

The protein resides in the cytoplasm. Its subcellular location is the nucleus. It is found in the chromosome. The catalysed reaction is Thiol-dependent hydrolysis of ester, thioester, amide, peptide and isopeptide bonds formed by the C-terminal Gly of ubiquitin (a 76-residue protein attached to proteins as an intracellular targeting signal).. Functionally, deubiquitinating enzyme that plays a key role in chromatin by mediating deubiquitination of histone H2A and HCFC1. Catalytic component of the polycomb repressive deubiquitinase (PR-DUB) complex, a complex that specifically mediates deubiquitination of histone H2A monoubiquitinated at 'Lys-120' (H2AK119ub1). Does not deubiquitinate monoubiquitinated histone H2B. The PR-DUB complex is an epigenetic regulator of gene expression and acts as a transcriptional coactivator, affecting genes involved in development, cell communication, signaling, cell proliferation and cell viability. Antagonizes PRC1 mediated H2AK119ub1 monoubiquitination. As part of the PR-DUB complex, associates with chromatin enriched in histone marks H3K4me1, H3K4me3, and H3K27Ac, but not in H3K27me3. Recruited to specific gene-regulatory regions by YY1. Acts as a regulator of cell growth by mediating deubiquitination of HCFC1 N-terminal and C-terminal chains, with some specificity toward 'Lys-48'-linked polyubiquitin chains compared to 'Lys-63'-linked polyubiquitin chains. Deubiquitination of HCFC1 does not lead to increase stability of HCFC1. Interferes with the BRCA1 and BARD1 heterodimer activity by inhibiting their ability to mediate ubiquitination and autoubiquitination. It however does not mediate deubiquitination of BRCA1 and BARD1. Able to mediate autodeubiquitination via intramolecular interactions to counteract monoubiquitination at the nuclear localization signal (NLS), thereby protecting it from cytoplasmic sequestration. Negatively regulates epithelial-mesenchymal transition (EMT) of trophoblast stem cells during placental development by regulating genes involved in epithelial cell integrity, cell adhesion and cytoskeletal organization. The protein is Ubiquitin carboxyl-terminal hydrolase BAP1 of Homo sapiens (Human).